Here is a 342-residue protein sequence, read N- to C-terminus: Porphobilinogen deaminase (342 aa).

Cys249 carries the post-translational modification S-(dipyrrolylmethanemethyl)cysteine. The interval 323-342 is disordered; sequence AAAKQGAAEDGAADSAATGE.

It belongs to the HMBS family. As to quaternary structure, monomer. It depends on dipyrromethane as a cofactor.

It carries out the reaction 4 porphobilinogen + H2O = hydroxymethylbilane + 4 NH4(+). Its pathway is porphyrin-containing compound metabolism; protoporphyrin-IX biosynthesis; coproporphyrinogen-III from 5-aminolevulinate: step 2/4. Tetrapolymerization of the monopyrrole PBG into the hydroxymethylbilane pre-uroporphyrinogen in several discrete steps. The polypeptide is Porphobilinogen deaminase (Paraburkholderia phytofirmans (strain DSM 17436 / LMG 22146 / PsJN) (Burkholderia phytofirmans)).